A 190-amino-acid polypeptide reads, in one-letter code: uncharacterized protein (190 aa).

Over 1–55 the chain is Cytoplasmic; the sequence is MSRLRRFNRKILSLSSDYTHDGESDQEDVSILPLDTEEQEELIQKFETNAHITNK. A helical transmembrane segment spans residues 56–76; the sequence is LYINLLSILYLLYGGLLMILV. Topologically, residues 77-80 are extracellular; that stretch reads RKSR. A helical membrane pass occupies residues 81 to 101; it reads GYIKLALLAGANSLICSCITL. Over 102-123 the chain is Cytoplasmic; that stretch reads RYDIVNDYLLFKKFKLRVSNFS. The helical transmembrane segment at 124–144 threads the bilayer; sequence INIINIILLVLMAWISFNHVV. The Extracellular segment spans residues 145–149; the sequence is EDKKT. Residues 150–170 traverse the membrane as a helical segment; that stretch reads VLCLQVPMFLFWVAVLVKRWA. Topologically, residues 171-190 are cytoplasmic; it reads RNIEDEIADLRCLKYKYKNA.

The protein resides in the membrane. This is an uncharacterized protein from Saccharomyces cerevisiae (strain ATCC 204508 / S288c) (Baker's yeast).